The primary structure comprises 213 residues: E3 ubiquitin-protein ligase NleG8 (213 aa).

The RING/U-box domain stretch occupies residues 136 to 189; sequence CPITLCVPETGVFVKNARCSKVCSLYDISALTEMLRRNASHPLSREAFTPGMIV. The PDZ-binding motif motif lies at 211–213; it reads TRL.

The protein belongs to the NleG E3 ligase family. In terms of assembly, interacts with host GOPC (human protein).

Its subcellular location is the secreted. It localises to the host cytoplasm. It carries out the reaction S-ubiquitinyl-[E2 ubiquitin-conjugating enzyme]-L-cysteine + [acceptor protein]-L-lysine = [E2 ubiquitin-conjugating enzyme]-L-cysteine + N(6)-ubiquitinyl-[acceptor protein]-L-lysine.. Its function is as follows. Effector proteins function to alter host cell physiology and promote bacterial survival in host tissues. This protein is an E3 ubiquitin-protein ligase that probably interferes with the host's ubiquitination pathway and targets host proteins for proteasomal degradation. Mice infected with a strain of bacteria deleted for this gene had an increased survival rate. Can be ubiquitinylated, and ubiquitinate ubiquitin, giving rise to polyubiquitin chains (in vitro). The chain is E3 ubiquitin-protein ligase NleG8 from Citrobacter rodentium.